We begin with the raw amino-acid sequence, 313 residues long: tRNA-cytidine(32) 2-sulfurtransferase (313 aa).

Residues 47 to 52 (SGGKDS) carry the PP-loop motif motif. Residues cysteine 122, cysteine 125, and cysteine 213 each coordinate [4Fe-4S] cluster. Residues 288 to 313 (PVGWQPEDDEDTEKRPPVRLDVLEIK) are disordered. The span at 299–313 (TEKRPPVRLDVLEIK) shows a compositional bias: basic and acidic residues.

It belongs to the TtcA family. In terms of assembly, homodimer. Mg(2+) is required as a cofactor. Requires [4Fe-4S] cluster as cofactor.

The protein localises to the cytoplasm. It carries out the reaction cytidine(32) in tRNA + S-sulfanyl-L-cysteinyl-[cysteine desulfurase] + AH2 + ATP = 2-thiocytidine(32) in tRNA + L-cysteinyl-[cysteine desulfurase] + A + AMP + diphosphate + H(+). The protein operates within tRNA modification. Catalyzes the ATP-dependent 2-thiolation of cytidine in position 32 of tRNA, to form 2-thiocytidine (s(2)C32). The sulfur atoms are provided by the cysteine/cysteine desulfurase (IscS) system. This Yersinia pseudotuberculosis serotype O:1b (strain IP 31758) protein is tRNA-cytidine(32) 2-sulfurtransferase.